A 184-amino-acid polypeptide reads, in one-letter code: Peptidyl-tRNA hydrolase (184 aa).

Y14 contributes to the tRNA binding site. H19 (proton acceptor) is an active-site residue. TRNA is bound by residues F64, N66, and N112.

This sequence belongs to the PTH family. As to quaternary structure, monomer.

The protein resides in the cytoplasm. It catalyses the reaction an N-acyl-L-alpha-aminoacyl-tRNA + H2O = an N-acyl-L-amino acid + a tRNA + H(+). Its function is as follows. Hydrolyzes ribosome-free peptidyl-tRNAs (with 1 or more amino acids incorporated), which drop off the ribosome during protein synthesis, or as a result of ribosome stalling. Catalyzes the release of premature peptidyl moieties from peptidyl-tRNA molecules trapped in stalled 50S ribosomal subunits, and thus maintains levels of free tRNAs and 50S ribosomes. The protein is Peptidyl-tRNA hydrolase of Thermoanaerobacter pseudethanolicus (strain ATCC 33223 / 39E) (Clostridium thermohydrosulfuricum).